The following is a 292-amino-acid chain: NAD kinase (292 aa).

Residue aspartate 73 is the Proton acceptor of the active site. Residues 73–74 (DG), 147–148 (NE), histidine 158, arginine 175, aspartate 177, 188–193 (TGYSLS), and glutamine 247 each bind NAD(+).

It belongs to the NAD kinase family. A divalent metal cation is required as a cofactor.

It localises to the cytoplasm. It carries out the reaction NAD(+) + ATP = ADP + NADP(+) + H(+). Involved in the regulation of the intracellular balance of NAD and NADP, and is a key enzyme in the biosynthesis of NADP. Catalyzes specifically the phosphorylation on 2'-hydroxyl of the adenosine moiety of NAD to yield NADP. This Buchnera aphidicola subsp. Schizaphis graminum (strain Sg) protein is NAD kinase.